Reading from the N-terminus, the 284-residue chain is MDAIKKKMQAMKLEKDNAMDRADTLEQQNKEANNRAEKSEEEVFGLQKKLQQLENDLDSVQEALLKANQHLEEKDKALSNAEGEVAALNRRIQLLEEDLERSEERLNTATTKLAEASQAADESERMRKVLENRSLSDEERMDALENQLKEARFLAEEADRKYDEVARKLAMVEADLERAEERAETGESKIVELEEELRVVGNNLKSLEVSEEKANQREEAYKEQIKTLTNKLKAAEARAEFAERSVQKLQKEVDRLEDELVNEKEKYKSITDELDQTFSELSGY.

Methionine 1 carries the post-translational modification N-acetylmethionine. The tract at residues 1–42 is disordered; the sequence is MDAIKKKMQAMKLEKDNAMDRADTLEQQNKEANNRAEKSEEE. Residues 1-284 are a coiled coil; the sequence is MDAIKKKMQA…DQTFSELSGY (284 aa). A compositionally biased stretch (basic and acidic residues) spans 12-38; the sequence is KLEKDNAMDRADTLEQQNKEANNRAEK.

This sequence belongs to the tropomyosin family. In terms of assembly, homodimer.

Its function is as follows. Tropomyosin, in association with the troponin complex, plays a central role in the calcium dependent regulation of muscle contraction. This Pandalus borealis (Northern red shrimp) protein is Tropomyosin.